The sequence spans 343 residues: Aspartate carbamoyltransferase catalytic subunit (343 aa).

The carbamoyl phosphate site is built by Arg-91 and Thr-92. Lys-119 provides a ligand contact to L-aspartate. Positions 141, 171, and 174 each coordinate carbamoyl phosphate. L-aspartate contacts are provided by Arg-204 and Arg-259. Carbamoyl phosphate is bound by residues Gly-300 and Pro-301.

It belongs to the aspartate/ornithine carbamoyltransferase superfamily. ATCase family. Heterododecamer (2C3:3R2) of six catalytic PyrB chains organized as two trimers (C3), and six regulatory PyrI chains organized as three dimers (R2).

The enzyme catalyses carbamoyl phosphate + L-aspartate = N-carbamoyl-L-aspartate + phosphate + H(+). It functions in the pathway pyrimidine metabolism; UMP biosynthesis via de novo pathway; (S)-dihydroorotate from bicarbonate: step 2/3. Catalyzes the condensation of carbamoyl phosphate and aspartate to form carbamoyl aspartate and inorganic phosphate, the committed step in the de novo pyrimidine nucleotide biosynthesis pathway. In Burkholderia ambifaria (strain MC40-6), this protein is Aspartate carbamoyltransferase catalytic subunit.